Reading from the N-terminus, the 262-residue chain is Tethering factor for nuclear proteasome cut8 (262 aa).

This sequence belongs to the cut8/STS1 family. In terms of assembly, binds the proteasome. Post-translationally, the N-terminal part (residues 1 to 72) is polyubiquitinated by rhp6, which is required for the interaction with the proteasome.

Its subcellular location is the nucleus envelope. Functionally, together with nucleoporin alm1, tethers the proteasome to the nuclear envelope. Involved in ubiquitin-mediated protein degradation and facilitates the degradation of nuclear proteins like mitotic cyclin and cut2. Required for normal progression of anaphase. The polypeptide is Tethering factor for nuclear proteasome cut8 (Schizosaccharomyces pombe (strain 972 / ATCC 24843) (Fission yeast)).